A 377-amino-acid chain; its full sequence is 3-dehydroquinate synthase (377 aa).

NAD(+) is bound by residues 115-119 (GVIGD), 139-140 (TS), Lys152, and Lys162. 3 residues coordinate Zn(2+): Glu195, His257, and His276.

Belongs to the sugar phosphate cyclases superfamily. Dehydroquinate synthase family. Co(2+) serves as cofactor. Zn(2+) is required as a cofactor. It depends on NAD(+) as a cofactor.

It localises to the cytoplasm. It catalyses the reaction 7-phospho-2-dehydro-3-deoxy-D-arabino-heptonate = 3-dehydroquinate + phosphate. It functions in the pathway metabolic intermediate biosynthesis; chorismate biosynthesis; chorismate from D-erythrose 4-phosphate and phosphoenolpyruvate: step 2/7. Catalyzes the conversion of 3-deoxy-D-arabino-heptulosonate 7-phosphate (DAHP) to dehydroquinate (DHQ). This Rhizobium etli (strain ATCC 51251 / DSM 11541 / JCM 21823 / NBRC 15573 / CFN 42) protein is 3-dehydroquinate synthase.